A 449-amino-acid chain; its full sequence is Putative tartrate transporter (449 aa).

The next 11 membrane-spanning stretches (helical) occupy residues 34–54 (IVPFIMLLYFIAFLDRVNIGF), 64–84 (GFSSTVFGIGAGIFFVGYFLF), 99–119 (IWIARVMITWGIVSGLMAFVQ), 130–150 (LLGVAEAGFFPGIILYLSFWF), 156–176 (AAVTALFMAAAPLSTVLGSPI), 194–214 (WMFLIEAAPALILGVVVLFFL), 259–279 (VIALALVYFGTSAGLYTLGIW), 292–312 (IEVGFINAVPGIFAVVAMVLW), 336–356 (GLAFAAGATSVFMVLIALTIV), 367–387 (LWSMPTMFLSGPAAAAGIATI), and 414–434 (GGLYFVAGLLLISAILTLILA).

The protein belongs to the major facilitator superfamily. Phthalate permease family.

The protein localises to the cell membrane. Functionally, component of the tartrate utilization system and may allow entry of tartrate and tartrate dehydrogenase. The sequence is that of Putative tartrate transporter (ttuB) from Agrobacterium vitis (Rhizobium vitis).